The following is a 368-amino-acid chain: Alcohol dehydrogenase 6 (368 aa).

Ser23 carries the phosphoserine modification. Residues Cys47, His69, Cys99, Cys102, Cys105, Cys113, and Cys175 each contribute to the Zn(2+) site. NAD(+)-binding positions include Gly200–Gly205, Asp224, Lys229, and Val293–Val295.

Belongs to the zinc-containing alcohol dehydrogenase family. Class-V subfamily. As to quaternary structure, dimer. It depends on Zn(2+) as a cofactor. As to expression, stomach and liver.

It localises to the cytoplasm. The catalysed reaction is a primary alcohol + NAD(+) = an aldehyde + NADH + H(+). It carries out the reaction a secondary alcohol + NAD(+) = a ketone + NADH + H(+). Inhibited partially by pyrazole (10 mM) in the reaction mixture containing 100 mM ethanol at pH 10.0. Its function is as follows. Alcohol dehydrogenase. Catalyzes the NAD-dependent oxidation of primary alcohols to the corresponding aldehydes. Oxidizes secondary alcohols to the corresponding ketones. The polypeptide is Alcohol dehydrogenase 6 (ADH6) (Homo sapiens (Human)).